A 551-amino-acid polypeptide reads, in one-letter code: Histone-lysine N-methyltransferase SETDB2 (551 aa).

One can recognise an MBD domain in the interval 146-210 (LLGHNPLRAP…DRFSFSTQVC (65 aa)). Residues 269–329 (VCCDCTDGCT…RCENRVVQKG (61 aa)) enclose the Pre-SET domain. Zn(2+)-binding residues include cysteine 271, cysteine 273, cysteine 277, cysteine 283, cysteine 285, cysteine 310, cysteine 314, cysteine 316, and cysteine 321. Residues 332–537 (VRLQVFRTPE…AGTELTWSCT (206 aa)) form the SET domain. 342-344 (HMW) is a binding site for S-adenosyl-L-methionine. Residues 426–447 (SLAQRRDQQQFSISSETEDNRC) are disordered. Residues arginine 491 and 494–495 (TH) contribute to the S-adenosyl-L-methionine site.

Belongs to the class V-like SAM-binding methyltransferase superfamily.

The protein resides in the nucleus. Its subcellular location is the chromosome. It catalyses the reaction N(6),N(6)-dimethyl-L-lysyl(9)-[histone H3] + S-adenosyl-L-methionine = N(6),N(6),N(6)-trimethyl-L-lysyl(9)-[histone H3] + S-adenosyl-L-homocysteine + H(+). Its function is as follows. Histone methyltransferase involved in left-right axis specification in early development and mitosis. Specifically trimethylates 'Lys-9' of histone H3 (H3K9me3). H3K9me3 represents a specific tag for epigenetic transcriptional repression by recruiting HP1 (CBX1, CBX3 and/or CBX5) proteins to methylated histones. Contributes to H3K9me3 in both the interspersed repetitive elements and centromere-associated repeats. Plays a role in chromosome condensation and segregation during mitosis. During early development, required to specify the left-right axis by repressing expression of FGF8, leading to negatively regulate the dorsal organizer formation. In Danio rerio (Zebrafish), this protein is Histone-lysine N-methyltransferase SETDB2 (setdb2).